A 305-amino-acid polypeptide reads, in one-letter code: Probable lipid kinase YegS-like (305 aa).

One can recognise a DAGKc domain in the interval 2–134 (HPPAPALLII…DLAKVNDQRY (133 aa)). ATP is bound by residues T40, 66–72 (GDGTINE), and T95. Mg(2+)-binding residues include L215, D218, and L220. The active-site Proton acceptor is E271.

Belongs to the diacylglycerol/lipid kinase family. YegS lipid kinase subfamily. Mg(2+) is required as a cofactor. It depends on Ca(2+) as a cofactor.

Its subcellular location is the cytoplasm. Probably phosphorylates lipids; the in vivo substrate is unknown. This Serratia proteamaculans (strain 568) protein is Probable lipid kinase YegS-like.